The following is a 240-amino-acid chain: MSVKGVEMPEMTWDLDVGNKWRRRKALSRIHRFWECRLRVWWLSDAGVRETDPPRPRRRPTWMTAVFHVICAVLLTLMIMAIGALIAYLRYYHQDSWRDMLHDLFCGCHYPEKCRRHHERQRRRRRAMDVPDPELGDPARRPLNGAMYYGSGCRFDTVEMVDETRPAPPALSSPETGDDSNDDAVAGGGAGGVTSPATRTTSPNALLPEWMDAVHVAVQAAVQATVQVSGPRENAVSPAT.

A helical membrane pass occupies residues 69–89 (VICAVLLTLMIMAIGALIAYL). Disordered regions lie at residues 119 to 142 (ERQR…ARRP) and 164 to 199 (TRPA…PATR).

It belongs to the HHV-5 UL136 protein family. In terms of assembly, interacts with host ATP1B1.

Its subcellular location is the host membrane. This Human cytomegalovirus (strain Towne) (HHV-5) protein is Protein UL136 (UL136).